The sequence spans 258 residues: Acyl-[acyl-carrier-protein]--UDP-N-acetylglucosamine O-acyltransferase (258 aa).

The protein belongs to the transferase hexapeptide repeat family. LpxA subfamily. Homotrimer.

The protein resides in the cytoplasm. It carries out the reaction a (3R)-hydroxyacyl-[ACP] + UDP-N-acetyl-alpha-D-glucosamine = a UDP-3-O-[(3R)-3-hydroxyacyl]-N-acetyl-alpha-D-glucosamine + holo-[ACP]. It participates in glycolipid biosynthesis; lipid IV(A) biosynthesis; lipid IV(A) from (3R)-3-hydroxytetradecanoyl-[acyl-carrier-protein] and UDP-N-acetyl-alpha-D-glucosamine: step 1/6. Involved in the biosynthesis of lipid A, a phosphorylated glycolipid that anchors the lipopolysaccharide to the outer membrane of the cell. This Neisseria meningitidis serogroup C / serotype 2a (strain ATCC 700532 / DSM 15464 / FAM18) protein is Acyl-[acyl-carrier-protein]--UDP-N-acetylglucosamine O-acyltransferase.